A 103-amino-acid polypeptide reads, in one-letter code: UPF0145 protein Dred_2155 (103 aa).

This sequence belongs to the UPF0145 family.

The protein is UPF0145 protein Dred_2155 of Desulforamulus reducens (strain ATCC BAA-1160 / DSM 100696 / MI-1) (Desulfotomaculum reducens).